Consider the following 483-residue polypeptide: Regulatory protein ViaA (483 aa).

The protein belongs to the ViaA family. Homodimer. Interacts with RavA.

It localises to the cytoplasm. Its function is as follows. Component of the RavA-ViaA chaperone complex, which may act on the membrane to optimize the function of some of the respiratory chains. ViaA stimulates the ATPase activity of RavA. This is Regulatory protein ViaA from Escherichia coli (strain SMS-3-5 / SECEC).